Here is a 157-residue protein sequence, read N- to C-terminus: 2-C-methyl-D-erythritol 2,4-cyclodiphosphate synthase (157 aa).

A divalent metal cation contacts are provided by Asp-8 and His-10. 4-CDP-2-C-methyl-D-erythritol 2-phosphate is bound by residues 8-10 (DVH) and 34-35 (HS). A divalent metal cation is bound at residue His-42. 4-CDP-2-C-methyl-D-erythritol 2-phosphate is bound by residues 56 to 58 (DIG), 61 to 65 (FPDTD), 100 to 106 (AQAPKMA), 132 to 135 (TTSE), Phe-139, and Arg-142.

This sequence belongs to the IspF family. In terms of assembly, homotrimer. The cofactor is a divalent metal cation.

The enzyme catalyses 4-CDP-2-C-methyl-D-erythritol 2-phosphate = 2-C-methyl-D-erythritol 2,4-cyclic diphosphate + CMP. The protein operates within isoprenoid biosynthesis; isopentenyl diphosphate biosynthesis via DXP pathway; isopentenyl diphosphate from 1-deoxy-D-xylulose 5-phosphate: step 4/6. Functionally, involved in the biosynthesis of isopentenyl diphosphate (IPP) and dimethylallyl diphosphate (DMAPP), two major building blocks of isoprenoid compounds. Catalyzes the conversion of 4-diphosphocytidyl-2-C-methyl-D-erythritol 2-phosphate (CDP-ME2P) to 2-C-methyl-D-erythritol 2,4-cyclodiphosphate (ME-CPP) with a corresponding release of cytidine 5-monophosphate (CMP). This chain is 2-C-methyl-D-erythritol 2,4-cyclodiphosphate synthase, found in Photobacterium profundum (strain SS9).